The chain runs to 140 residues: Nucleoside diphosphate kinase (140 aa).

Positions 11, 59, 87, 93, 104, and 114 each coordinate ATP. The Pros-phosphohistidine intermediate role is filled by His117.

This sequence belongs to the NDK family. In terms of assembly, homotetramer. It depends on Mg(2+) as a cofactor.

It is found in the cytoplasm. It catalyses the reaction a 2'-deoxyribonucleoside 5'-diphosphate + ATP = a 2'-deoxyribonucleoside 5'-triphosphate + ADP. The enzyme catalyses a ribonucleoside 5'-diphosphate + ATP = a ribonucleoside 5'-triphosphate + ADP. Major role in the synthesis of nucleoside triphosphates other than ATP. The ATP gamma phosphate is transferred to the NDP beta phosphate via a ping-pong mechanism, using a phosphorylated active-site intermediate. The polypeptide is Nucleoside diphosphate kinase (Ruegeria pomeroyi (strain ATCC 700808 / DSM 15171 / DSS-3) (Silicibacter pomeroyi)).